The primary structure comprises 403 residues: F-box/kelch-repeat protein At5g39560 (403 aa).

The region spanning Pro-26 to Arg-72 is the F-box domain. Kelch repeat units follow at residues Glu-138–Gln-182, Ile-184–Asn-229, Asn-248–Val-294, and Tyr-296–Gly-340.

This is F-box/kelch-repeat protein At5g39560 from Arabidopsis thaliana (Mouse-ear cress).